A 496-amino-acid polypeptide reads, in one-letter code: Probable cytosol aminopeptidase (496 aa).

Mn(2+) contacts are provided by K262 and D267. K274 is a catalytic residue. Residues D285, D344, and E346 each coordinate Mn(2+). Residue R348 is part of the active site.

This sequence belongs to the peptidase M17 family. Mn(2+) serves as cofactor.

Its subcellular location is the cytoplasm. The catalysed reaction is Release of an N-terminal amino acid, Xaa-|-Yaa-, in which Xaa is preferably Leu, but may be other amino acids including Pro although not Arg or Lys, and Yaa may be Pro. Amino acid amides and methyl esters are also readily hydrolyzed, but rates on arylamides are exceedingly low.. It carries out the reaction Release of an N-terminal amino acid, preferentially leucine, but not glutamic or aspartic acids.. Functionally, presumably involved in the processing and regular turnover of intracellular proteins. Catalyzes the removal of unsubstituted N-terminal amino acids from various peptides. The chain is Probable cytosol aminopeptidase from Rhizobium leguminosarum bv. trifolii (strain WSM2304).